The sequence spans 198 residues: FMN-dependent NADH:quinone oxidoreductase (198 aa).

FMN is bound by residues serine 10, 16–18 (SQS), 94–97 (MYNF), and 138–141 (TRGG).

This sequence belongs to the azoreductase type 1 family. Homodimer. It depends on FMN as a cofactor.

It carries out the reaction 2 a quinone + NADH + H(+) = 2 a 1,4-benzosemiquinone + NAD(+). It catalyses the reaction N,N-dimethyl-1,4-phenylenediamine + anthranilate + 2 NAD(+) = 2-(4-dimethylaminophenyl)diazenylbenzoate + 2 NADH + 2 H(+). Functionally, quinone reductase that provides resistance to thiol-specific stress caused by electrophilic quinones. Its function is as follows. Also exhibits azoreductase activity. Catalyzes the reductive cleavage of the azo bond in aromatic azo compounds to the corresponding amines. The chain is FMN-dependent NADH:quinone oxidoreductase from Shewanella sp. (strain ANA-3).